Consider the following 140-residue polypeptide: Cell division protein SepF (140 aa).

The disordered stretch occupies residues 15 to 47 (DSQYEEPTEASQAAAPTESATNTRSTPKVVPMQ).

The protein belongs to the SepF family. As to quaternary structure, homodimer. Interacts with FtsZ.

The protein localises to the cytoplasm. Cell division protein that is part of the divisome complex and is recruited early to the Z-ring. Probably stimulates Z-ring formation, perhaps through the cross-linking of FtsZ protofilaments. Its function overlaps with FtsA. The chain is Cell division protein SepF from Lactiplantibacillus plantarum (strain ATCC BAA-793 / NCIMB 8826 / WCFS1) (Lactobacillus plantarum).